Reading from the N-terminus, the 237-residue chain is EFPTPLTTGLQVESIVFPSSVKPPGSTNSLFLGGAGVRGMEIQGNFVKFTGIGVYLEDKAIPLLAAKRKGKTVAELLDSVEFFRDIVTGPFEKFTQVTMILPLTGKQYSEKVSEMCVGVWKALGTYTDADGTTIEKFLEVFKDENFLPGSSILFTTSPLGSLTISFSKDGTIPEAANVVLENEKLAQAVIESVIGKNGVSPATKQSLASRLSDLMKQFDEESNGSVEVEDLSKNSCK.

Substrate contacts are provided by threonine 50 and serine 192.

This sequence belongs to the chalcone isomerase family.

The catalysed reaction is a chalcone = a flavanone.. It functions in the pathway secondary metabolite biosynthesis; flavonoid biosynthesis. Its function is as follows. Catalyzes the intramolecular cyclization of bicyclic chalcones into tricyclic (S)-flavanones. Responsible for the isomerization of 4,2',4',6'-tetrahydroxychalcone (also termed chalcone) into naringenin. This is Chalcone--flavanone isomerase (CHI) from Callistephus chinensis (China aster).